The sequence spans 136 residues: Lymphocyte antigen 6E (136 aa).

The first 26 residues, 1–26 (MSATSNMRVFLPVLLAALLGMEQVHS), serve as a signal peptide directing secretion. The region spanning 27-118 (LMCFSCTDQK…AGLGLRASIP (92 aa)) is the UPAR/Ly6 domain. 5 cysteine pairs are disulfide-bonded: Cys29/Cys54, Cys32/Cys41, Cys47/Cys76, Cys80/Cys98, and Cys99/Cys104. N-linked (GlcNAc...) asparagine glycosylation occurs at Asn105. Ala108 is lipidated: GPI-anchor amidated alanine. A propeptide spans 109 to 136 (AGLGLRASIPLLGLGLLLSLLALLQLSP) (removed in mature form).

In terms of assembly, interacts with CHRNA4. Interacts with CD3Z/CD247. As to expression, ubiquitously expressed in mouse adult tissues with maximal expression in the lung and the salivary gland. Expression is strikingly lower in the fetal tissues except for the placenta. Present in thymus where its expression is observed in immature thymocytes and thymic stromal cells. Also found on functionally active T-cells as well as B-cells and thymic dendritic cells.

The protein resides in the cell membrane. In terms of biological role, GPI-anchored cell surface protein that regulates T-lymphocytes proliferation, differentiation, and activation. Regulates the T-cell receptor (TCR) signaling by interacting with component CD3Z/CD247 at the plasma membrane, leading to CD3Z/CD247 phosphorylation modulation. Restricts the entry of murine coronavirus, mouse hepatitis virus, by interfering with spike protein-mediated membrane fusion. Also plays an essential role in placenta formation by acting as the main receptor for syncytin-A (SynA). Therefore, participates in the normal fusion of syncytiotrophoblast layer I (SynT-I) and in the proper morphogenesis of both fetal and maternal vasculatures within the placenta. May also act as a modulator of nicotinic acetylcholine receptors (nAChRs) activity. In vitro inhibits alpha-3:beta-4-containing nAChRs maximum response. This is Lymphocyte antigen 6E from Mus musculus (Mouse).